The chain runs to 946 residues: Structure-specific endonuclease subunit SLX4 (946 aa).

The span at 1 to 14 (MPASPLPALSPPAS) shows a compositional bias: pro residues. Disordered regions lie at residues 1-35 (MPAS…IPPD), 54-119 (QHFD…EEAV), 147-318 (PSDE…GGFT), 339-399 (ADSA…AAQL), 416-471 (TKVP…PKHI), 577-748 (FPLL…GSGR), and 765-799 (ALSP…KADS). Residues 54–74 (QHFDDDIAGKDQEQSRKKSPE) show a composition bias toward basic and acidic residues. Composition is skewed to basic residues over residues 160-169 (KAGKPRKPRA) and 182-195 (KPKR…KAAK). Over residues 278 to 287 (AVSRRRDWTP) the composition is skewed to basic and acidic residues. The segment covering 453 to 469 (SKARSKKASTKAAAKPK) has biased composition (basic residues). Positions 627 to 636 (KANDEPDHVM) are enriched in basic and acidic residues. The span at 707–717 (KSQSAIATSGS) shows a compositional bias: polar residues. Basic and acidic residues predominate over residues 722–733 (KEPKRTKGKEVK).

This sequence belongs to the SLX4 family. As to quaternary structure, forms a heterodimer with SLX1. In terms of processing, phosphorylated in response to DNA damage.

Its subcellular location is the nucleus. Functionally, regulatory subunit of the SLX1-SLX4 structure-specific endonuclease that resolves DNA secondary structures generated during DNA repair and recombination. Has endonuclease activity towards branched DNA substrates, introducing single-strand cuts in duplex DNA close to junctions with ss-DNA. The chain is Structure-specific endonuclease subunit SLX4 from Phaeosphaeria nodorum (strain SN15 / ATCC MYA-4574 / FGSC 10173) (Glume blotch fungus).